Reading from the N-terminus, the 89-residue chain is Small ribosomal subunit protein uS17 (89 aa).

This sequence belongs to the universal ribosomal protein uS17 family. In terms of assembly, part of the 30S ribosomal subunit.

One of the primary rRNA binding proteins, it binds specifically to the 5'-end of 16S ribosomal RNA. This Chlorobium chlorochromatii (strain CaD3) protein is Small ribosomal subunit protein uS17.